A 265-amino-acid chain; its full sequence is Acetylglutamate kinase (265 aa).

Substrate contacts are provided by residues 41–42 (GG), R63, and N156.

Belongs to the acetylglutamate kinase family. ArgB subfamily.

It localises to the cytoplasm. It carries out the reaction N-acetyl-L-glutamate + ATP = N-acetyl-L-glutamyl 5-phosphate + ADP. Its pathway is amino-acid biosynthesis; L-arginine biosynthesis; N(2)-acetyl-L-ornithine from L-glutamate: step 2/4. Its function is as follows. Catalyzes the ATP-dependent phosphorylation of N-acetyl-L-glutamate. The sequence is that of Acetylglutamate kinase from Brevibacillus brevis (strain 47 / JCM 6285 / NBRC 100599).